We begin with the raw amino-acid sequence, 741 residues long: Catalase-peroxidase (741 aa).

The signal sequence occupies residues 1–23 (MLKKIITALGMSGMLLASSNAIA). Positions 102–223 (WHDAGTYRIY…YAATQMGLIY (122 aa)) form a cross-link, tryptophyl-tyrosyl-methioninium (Trp-Tyr) (with M-249). The Proton acceptor role is filled by histidine 103. The tryptophyl-tyrosyl-methioninium (Tyr-Met) (with W-102) cross-link spans 223-249 (YVNPEGPDGKPDIKGAASEIRQAFRAM). Histidine 264 lines the heme b pocket.

The protein belongs to the peroxidase family. Peroxidase/catalase subfamily. As to quaternary structure, homodimer or homotetramer. Requires heme b as cofactor. In terms of processing, formation of the three residue Trp-Tyr-Met cross-link is important for the catalase, but not the peroxidase activity of the enzyme.

It carries out the reaction H2O2 + AH2 = A + 2 H2O. The catalysed reaction is 2 H2O2 = O2 + 2 H2O. Functionally, bifunctional enzyme with both catalase and broad-spectrum peroxidase activity. In Francisella tularensis subsp. holarctica (strain FTNF002-00 / FTA), this protein is Catalase-peroxidase.